We begin with the raw amino-acid sequence, 469 residues long: Glutamate--tRNA ligase (469 aa).

Positions 11–21 (PSPTGFIHLGN) match the 'HIGH' region motif. The span at 118–131 (GEKPRYDGTWRPEP) shows a compositional bias: basic and acidic residues. The interval 118-139 (GEKPRYDGTWRPEPGKVLPEPP) is disordered. The 'KMSKS' region signature appears at 243-247 (KMSKR). Position 246 (Lys-246) interacts with ATP.

It belongs to the class-I aminoacyl-tRNA synthetase family. Glutamate--tRNA ligase type 1 subfamily. As to quaternary structure, monomer.

The protein localises to the cytoplasm. The catalysed reaction is tRNA(Glu) + L-glutamate + ATP = L-glutamyl-tRNA(Glu) + AMP + diphosphate. Functionally, catalyzes the attachment of glutamate to tRNA(Glu) in a two-step reaction: glutamate is first activated by ATP to form Glu-AMP and then transferred to the acceptor end of tRNA(Glu). The sequence is that of Glutamate--tRNA ligase from Burkholderia mallei (strain NCTC 10247).